A 386-amino-acid chain; its full sequence is DNA-directed RNA polymerase subunit Rpo1C (386 aa).

It belongs to the RNA polymerase beta' chain family. Part of the RNA polymerase complex.

It is found in the cytoplasm. The catalysed reaction is RNA(n) + a ribonucleoside 5'-triphosphate = RNA(n+1) + diphosphate. Its function is as follows. DNA-dependent RNA polymerase (RNAP) catalyzes the transcription of DNA into RNA using the four ribonucleoside triphosphates as substrates. Forms part of the jaw domain. This is DNA-directed RNA polymerase subunit Rpo1C from Methanococcus maripaludis (strain C6 / ATCC BAA-1332).